A 212-amino-acid chain; its full sequence is 2,3-bisphosphoglycerate-dependent phosphoglycerate mutase (212 aa).

Residues 9 to 16 (RHGQSEWN), 22 to 23 (TG), R61, 88 to 91 (ERDY), K99, 115 to 116 (RR), and 159 to 160 (GN) contribute to the substrate site. H10 functions as the Tele-phosphohistidine intermediate in the catalytic mechanism. E88 (proton donor/acceptor) is an active-site residue.

The protein belongs to the phosphoglycerate mutase family. BPG-dependent PGAM subfamily. In terms of assembly, homodimer.

The catalysed reaction is (2R)-2-phosphoglycerate = (2R)-3-phosphoglycerate. Its pathway is carbohydrate degradation; glycolysis; pyruvate from D-glyceraldehyde 3-phosphate: step 3/5. Catalyzes the interconversion of 2-phosphoglycerate and 3-phosphoglycerate. This chain is 2,3-bisphosphoglycerate-dependent phosphoglycerate mutase, found in Methylobacterium radiotolerans (strain ATCC 27329 / DSM 1819 / JCM 2831 / NBRC 15690 / NCIMB 10815 / 0-1).